The sequence spans 999 residues: Testis anion transporter 1 (999 aa).

Residues 1–93 are Cytoplasmic-facing; the sequence is MQTERSLQSF…YRFKDWLLGD (93 aa). The chain crosses the membrane as a helical span at residues 94-114; it reads LLAGLSVGLVQVPQGLILSLL. The Extracellular portion of the chain corresponds to 115–117; it reads TRQ. Residues 118-138 form a helical membrane-spanning segment; it reads LIPPLNVTYAAFCSSVIYVIF. Gly-139 is a topological domain (cytoplasmic). The chain crosses the membrane as a helical span at residues 140 to 160; the sequence is SCHQMSIGPFFLVSALMINVL. Over 161–200 the chain is Extracellular; it reads KDRPFNNGHLILGTFVKDDFSVPTFYLSYNRSLSMVASTT. The N-linked (GlcNAc...) asparagine glycan is linked to Asn-190. The helical transmembrane segment at 201 to 221 threads the bilayer; it reads FLTGIIQLSMGMLGMGFMATY. Topologically, residues 222 to 230 are cytoplasmic; it reads LPEAATSAY. A helical transmembrane segment spans residues 231-251; the sequence is LAAVALHIILAQMTCILGIMV. At 252–268 the chain is on the extracellular side; sequence SFHAGPISFIYNIINYC. Residues 269–289 traverse the membrane as a helical segment; it reads IALPKANSTSILLFITSVVAL. Over 290–305 the chain is Cytoplasmic; sequence RINKCIRITFNRYPIE. Residues 306-326 form a helical membrane-spanning segment; the sequence is FPMELLLILGFSLLTSKITMA. At 327–354 the chain is on the extracellular side; the sequence is TENSKMLMNMIPYSFVFPENPEFGILSR. A helical transmembrane segment spans residues 355–375; it reads VVLQALSLSFVSSFLLISLGK. Residues 376–390 are Cytoplasmic-facing; it reads KIANFHNYRTNSNQD. Residues 391 to 411 form a helical membrane-spanning segment; the sequence is LIAIGLCNLLSSFFKCCVFTG. The Extracellular portion of the chain corresponds to 412-427; it reads SLSRTTIQDKSGGRQQ. Residues 428–448 traverse the membrane as a helical segment; the sequence is FASLVGAGVMLLLMVKMESFF. The Cytoplasmic segment spans residues 449–453; sequence HNLPN. The chain crosses the membrane as a helical span at residues 454–474; the sequence is AVLAGIILSNVVPYLEAIYNL. Residues 475 to 494 lie on the Extracellular side of the membrane; that stretch reads PSLWRQDQYECIIWMVTFSS. A helical membrane pass occupies residues 495 to 515; it reads AILLGLDVGLLISLAFTFFVI. The Cytoplasmic segment spans residues 516–544; the sequence is TIRSHRTKILVLGQIPNTNIYRNVNDYRE. The 256-residue stretch at 541 to 796 folds into the STAS domain; sequence DYREVILIPG…LSLHDAVLFA (256 aa). The chain crosses the membrane as a helical span at residues 545 to 565; the sequence is VILIPGVKIFQCCSSITFVNV. The Extracellular portion of the chain corresponds to 566–999; the sequence is YHLKQKVLKE…RKPHNYPNSP (434 aa). An interaction with RACGAP1 region spans residues 661 to 999; it reads TVSSTSQRNI…RKPHNYPNSP (339 aa). 2 disordered regions span residues 678-701 and 893-999; these read EKAWLPNSPPRNSPLPPPEASESL and SELD…PNSP. The segment covering 684 to 696 has biased composition (pro residues); the sequence is NSPPRNSPLPPPE. Acidic residues-rich tracts occupy residues 893–903 and 912–947; these read SELDPGSELDS and ELESELETDAQTEPETEEEPELEPEPEPEPETEPEP. Over residues 973–982 the composition is skewed to polar residues; that stretch reads GSSNSQSRAP.

The protein belongs to the SLC26A/SulP transporter (TC 2.A.53) family. In terms of assembly, interacts with RACGAP1. Interacts with CFTR; stimulates anion transport activity of CFTR. In terms of processing, N-glycosylated. In terms of tissue distribution, expressed in testis and epididymis. Located at the end of the midpiece of the flagella, known as the annulus, in spermatozoa.

The protein resides in the membrane. The enzyme catalyses sulfate(out) + chloride(in) = sulfate(in) + chloride(out). It carries out the reaction oxalate(in) + chloride(out) = oxalate(out) + chloride(in). In terms of biological role, antiporter that mediates the exchange of sulfate and oxalate against chloride ions across a membrane. Stimulates anion transport activity of CFTR. May cooperate with CFTR in the regulation of chloride and bicarbonate ions fluxes required for activation of the ADCY10/PKA pathway during sperm motility and sperm capacitation. May play a role in sperm tail differentiation and motility and hence male fertility. The polypeptide is Testis anion transporter 1 (Mus musculus (Mouse)).